Here is a 95-residue protein sequence, read N- to C-terminus: Co-chaperonin GroES (95 aa).

Belongs to the GroES chaperonin family. As to quaternary structure, heptamer of 7 subunits arranged in a ring. Interacts with the chaperonin GroEL.

It is found in the cytoplasm. In terms of biological role, together with the chaperonin GroEL, plays an essential role in assisting protein folding. The GroEL-GroES system forms a nano-cage that allows encapsulation of the non-native substrate proteins and provides a physical environment optimized to promote and accelerate protein folding. GroES binds to the apical surface of the GroEL ring, thereby capping the opening of the GroEL channel. This is Co-chaperonin GroES from Chlorobium limicola (strain DSM 245 / NBRC 103803 / 6330).